The chain runs to 511 residues: Sodium/hydrogen exchanger 9B1 (511 aa).

Residues 1-10 (MHTTESKDEH) are compositionally biased toward basic and acidic residues. The disordered stretch occupies residues 1–41 (MHTTESKDEHLEDENFQTSTTPQSLIDPNSTAHEETKTVIS). A compositionally biased stretch (polar residues) spans 16–31 (FQTSTTPQSLIDPNST). 13 helical membrane-spanning segments follow: residues 67–87 (IITN…VLGS), 95–115 (LFGL…LQLI), 116–136 (RIPL…GFTI), 152–172 (WSSI…GLGL), 187–207 (LAVG…HFIM), 215–235 (FLLG…SMMV), 260–280 (VLAI…GGIV), 284–304 (IASI…GFFV), 337–357 (IGLH…AGTK), 368–388 (IITN…GAEV), 398–418 (IGIF…VTYI), 431–451 (IFIA…GPLV), and 472–492 (VAFL…GILG).

It belongs to the monovalent cation:proton antiporter 1 (CPA1) transporter (TC 2.A.36) family.

Its subcellular location is the cell projection. The protein localises to the cilium. The protein resides in the flagellum membrane. In terms of biological role, sperm-specific Na(+)/H(+) exchanger involved in intracellular pH regulation of spermatozoa. Involved in sperm motility and fertility. The chain is Sodium/hydrogen exchanger 9B1 (SLC9B1) from Macaca fascicularis (Crab-eating macaque).